The primary structure comprises 263 residues: Glutamate racemase (263 aa).

Substrate is bound by residues 13 to 14 and 45 to 46; these read DS and YG. Cysteine 77 functions as the Proton donor/acceptor in the catalytic mechanism. 78–79 lines the substrate pocket; it reads NT. Residue cysteine 185 is the Proton donor/acceptor of the active site. 186–187 lines the substrate pocket; it reads TH.

The protein belongs to the aspartate/glutamate racemases family.

The catalysed reaction is L-glutamate = D-glutamate. It participates in cell wall biogenesis; peptidoglycan biosynthesis. Provides the (R)-glutamate required for cell wall biosynthesis. The chain is Glutamate racemase from Vibrio vulnificus (strain CMCP6).